The chain runs to 248 residues: Adenosylcobinamide-GDP ribazoletransferase (248 aa).

7 consecutive transmembrane segments (helical) span residues 24–44 (EINLKKGSALLPFVGVIIGAW), 70–90 (VIITGGFHVDALADTADGLFS), 106–126 (VGANGVIAICFYFLFYGALFL), 134–154 (ICWLFFVLPIVAKGVTMLLFA), 168–188 (IFLGVPWWPIVIAQVIVLAVL), 189–209 (GLFFSYVGVIAYVGVILFTII), and 228–248 (AGGQMGQLICLFCLVLLWGLV).

Belongs to the CobS family. It depends on Mg(2+) as a cofactor.

It is found in the cell membrane. The enzyme catalyses alpha-ribazole + adenosylcob(III)inamide-GDP = adenosylcob(III)alamin + GMP + H(+). It carries out the reaction alpha-ribazole 5'-phosphate + adenosylcob(III)inamide-GDP = adenosylcob(III)alamin 5'-phosphate + GMP + H(+). It functions in the pathway cofactor biosynthesis; adenosylcobalamin biosynthesis; adenosylcobalamin from cob(II)yrinate a,c-diamide: step 7/7. Its function is as follows. Joins adenosylcobinamide-GDP and alpha-ribazole to generate adenosylcobalamin (Ado-cobalamin). Also synthesizes adenosylcobalamin 5'-phosphate from adenosylcobinamide-GDP and alpha-ribazole 5'-phosphate. This chain is Adenosylcobinamide-GDP ribazoletransferase, found in Listeria monocytogenes serovar 1/2a (strain ATCC BAA-679 / EGD-e).